Here is a 518-residue protein sequence, read N- to C-terminus: Chromosomal replication initiator protein DnaA (518 aa).

The interval 1 to 76 (METDGGDFPS…RALSEAYGSP (76 aa)) is domain I, interacts with DnaA modulators. The segment at 76-176 (PIRLAVTVDP…RRPTTRIENS (101 aa)) is domain II. Residues 91-174 (LTPERTGEHS…QPRRPTTRIE (84 aa)) are disordered. Basic and acidic residues predominate over residues 124–135 (DGLHLDERRSGS). Acidic residues predominate over residues 136 to 147 (LEEDSPLDDSDP). Residues 177-393 (RLNPKYIFET…GALIRVTAFA (217 aa)) are domain III, AAA+ region. 4 residues coordinate ATP: Gly221, Gly223, Lys224, and Thr225. Positions 394–518 (SLNRQPVDMQ…TNRIKKQSGA (125 aa)) are domain IV, binds dsDNA.

The protein belongs to the DnaA family. In terms of assembly, oligomerizes as a right-handed, spiral filament on DNA at oriC.

It localises to the cytoplasm. Plays an essential role in the initiation and regulation of chromosomal replication. ATP-DnaA binds to the origin of replication (oriC) to initiate formation of the DNA replication initiation complex once per cell cycle. Binds the DnaA box (a 9 base pair repeat at the origin) and separates the double-stranded (ds)DNA. Forms a right-handed helical filament on oriC DNA; dsDNA binds to the exterior of the filament while single-stranded (ss)DNA is stabiized in the filament's interior. The ATP-DnaA-oriC complex binds and stabilizes one strand of the AT-rich DNA unwinding element (DUE), permitting loading of DNA polymerase. After initiation quickly degrades to an ADP-DnaA complex that is not apt for DNA replication. Binds acidic phospholipids. The protein is Chromosomal replication initiator protein DnaA of Kineococcus radiotolerans (strain ATCC BAA-149 / DSM 14245 / SRS30216).